Here is a 317-residue protein sequence, read N- to C-terminus: Transaldolase (317 aa).

K125 serves as the catalytic Schiff-base intermediate with substrate.

This sequence belongs to the transaldolase family. Type 1 subfamily. Homodimer.

It is found in the cytoplasm. It catalyses the reaction D-sedoheptulose 7-phosphate + D-glyceraldehyde 3-phosphate = D-erythrose 4-phosphate + beta-D-fructose 6-phosphate. Its pathway is carbohydrate degradation; pentose phosphate pathway; D-glyceraldehyde 3-phosphate and beta-D-fructose 6-phosphate from D-ribose 5-phosphate and D-xylulose 5-phosphate (non-oxidative stage): step 2/3. Transaldolase is important for the balance of metabolites in the pentose-phosphate pathway. The sequence is that of Transaldolase from Delftia acidovorans (strain DSM 14801 / SPH-1).